The following is a 122-amino-acid chain: Fluoride-specific ion channel FluC 2 (122 aa).

4 consecutive transmembrane segments (helical) span residues 4–24, 38–58, 63–83, and 96–116; these read VAVW…RFVV, LGTL…GGLA, AALL…TWML, and AALA…FIGQ. Na(+) is bound by residues glycine 73 and threonine 76.

This sequence belongs to the fluoride channel Fluc/FEX (TC 1.A.43) family.

It is found in the cell membrane. It carries out the reaction fluoride(in) = fluoride(out). Na(+) is not transported, but it plays an essential structural role and its presence is essential for fluoride channel function. In terms of biological role, fluoride-specific ion channel. Important for reducing fluoride concentration in the cell, thus reducing its toxicity. In Mycolicibacterium paratuberculosis (strain ATCC BAA-968 / K-10) (Mycobacterium paratuberculosis), this protein is Fluoride-specific ion channel FluC 2.